Reading from the N-terminus, the 355-residue chain is Replication-associated protein (355 aa).

Residues 11-114 enclose the CRESS-DNA virus Rep endonuclease domain; that stretch reads SHRNANTFLT…PLAVFERGTF (104 aa). The RCR-1 signature appears at 18–21; sequence FLTY. A divalent metal cation is bound by residues E52, H60, and H62. Residues 60–62 carry the RCR-2 motif; sequence HLH. The active-site For DNA cleavage activity is Y100. Residues 100–103 carry the RCR-3 motif; that stretch reads YILK. Residue E104 participates in a divalent metal cation binding. The oligomerization stretch occupies residues 175 to 187; it reads SANKLFPEIQEEF. Position 229–236 (229–236) interacts with ATP; it reads GPTRTGKS. Residues 252 to 270 form a transactivation region; that stretch reads VDWSSYNEDAIYNIVDDIP. The Nuclear localization signal motif lies at 292–303; it reads KYGKKKKVQKKS.

It belongs to the geminiviridae Rep protein family. In terms of assembly, homooligomer. Rep binds to repeated DNA motifs (iterons). Forms the O-complex, which is a Rep-DNA complex involved in the initiation of RCR. Part of the C- and V-complexes which are RepA-Rep-DNA complexes involved in the c-sense and v-sense transcription. It depends on Mg(2+) as a cofactor. Requires Mn(2+) as cofactor.

The protein localises to the host nucleus. Functionally, essential for the replication of viral ssDNA. The closed circular ssDNA genome is first converted to a superhelical dsDNA. Rep binds a specific region at the genome origin of replication. It introduces an endonucleolytic nick within the conserved sequence 5'-TAATATTAC-3' in the intergenic region of the genome present in all geminiviruses, thereby initiating the rolling circle replication (RCR). Following cleavage, binds covalently to the 5'-phosphate of DNA as a tyrosyl ester. The cleavage gives rise to a free 3'-OH that serves as a primer for the cellular DNA polymerase. The polymerase synthesizes the (+) strand DNA by rolling circle mechanism. After one round of replication, a Rep-catalyzed nucleotidyl transfer reaction releases a circular single-stranded virus genome, thereby terminating the replication. Displays origin-specific DNA cleavage, nucleotidyl transferase, ATPase and helicase activities. Acts as an inhibitor of C-sense gene transcription. The protein is Replication-associated protein of Maize streak virus genotype A (isolate South Africa) (MSV).